Reading from the N-terminus, the 774-residue chain is Probable E3 ubiquitin-protein ligase HECTD2 (774 aa).

A disordered region spans residues 1-51 (MSEAARDLSPGAPPAVAAAAPEERKGKEPEREKLPPIVTAGAAAGLDRGSK). Serine 9 carries the phosphoserine modification. Residues 21–34 (PEERKGKEPEREKL) show a composition bias toward basic and acidic residues. In terms of domain architecture, HECT spans 435 to 774 (KRADLKKKLK…ISNSEGFGLE (340 aa)). Cysteine 742 (glycyl thioester intermediate) is an active-site residue.

It catalyses the reaction S-ubiquitinyl-[E2 ubiquitin-conjugating enzyme]-L-cysteine + [acceptor protein]-L-lysine = [E2 ubiquitin-conjugating enzyme]-L-cysteine + N(6)-ubiquitinyl-[acceptor protein]-L-lysine.. Its pathway is protein modification; protein ubiquitination. Its function is as follows. E3 ubiquitin-protein ligase which accepts ubiquitin from an E2 ubiquitin-conjugating enzyme in the form of a thioester and then directly transfers the ubiquitin to targeted substrates. The chain is Probable E3 ubiquitin-protein ligase HECTD2 (Hectd2) from Mus musculus (Mouse).